A 177-amino-acid polypeptide reads, in one-letter code: Protein C2-DOMAIN ABA-RELATED 4 (177 aa).

The region spanning 4–118 (ACPARTSSLM…LRMQLDGLPS (115 aa)) is the C2 domain. Residues Arg33, Asp34, Asp39, Asp85, His86, Asp87, and Asp93 each contribute to the Ca(2+) site.

The protein belongs to the plant CAR protein family. As to quaternary structure, dimers and oligomers. Binds to PYR/PYL/RCAR abscisic acid intracellular receptors in an ABA-independent manner, both at the plasma membrane and in the nucleus. Interacts directly with PYR1, PYL1, PYL4, PYL6 and PYL8. Binds phospholipids in a Ca(2+)-dependent manner. Interacts with YchF1. Ca(2+) serves as cofactor.

The protein localises to the cell membrane. It is found in the nucleus. The protein resides in the cytoplasm. It localises to the cytosol. Functionally, mediates the transient calcium-dependent interaction of PYR/PYL/RCAR abscisic acid (ABA) receptors with the plasma membrane and thus regulates ABA sensitivity. Stimulates the GTPase/ATPase activities of YchF1, and regulates its subcellular localization. Promotes tolerance towards salinity stress by limiting the accumulation of reactive oxygen species (ROS). Promotes resistance to bacterial pathogens (e.g. Xanthomonas oryzae pv. oryzae and P.syringae pv. tomato DC3000). Binds liposomes in the absence of exogenous Ca(2+), but this activity is enhanced in the presence of Ca(2+) and generates membrane curvature. The chain is Protein C2-DOMAIN ABA-RELATED 4 from Arabidopsis thaliana (Mouse-ear cress).